Reading from the N-terminus, the 199-residue chain is Large ribosomal subunit protein bL25 (199 aa).

This sequence belongs to the bacterial ribosomal protein bL25 family. CTC subfamily. Part of the 50S ribosomal subunit; part of the 5S rRNA/L5/L18/L25 subcomplex. Contacts the 5S rRNA. Binds to the 5S rRNA independently of L5 and L18.

Functionally, this is one of the proteins that binds to the 5S RNA in the ribosome where it forms part of the central protuberance. This Caulobacter sp. (strain K31) protein is Large ribosomal subunit protein bL25.